Here is a 152-residue protein sequence, read N- to C-terminus: MGRFIFLSFGLLVVFLSLSGTGADCPSGWSSYEGHCYNIFHLFKTWAEAERFCRKQVKGAHLVSIESSEEADFVAQLVSENMKRYGIYIWIGLRVRGKKKQCSSQWSDGSSVSYQNWIEAESKTCLGLQKETEFRKWFNIYCGERNPFVCEA.

Positions 1–23 (MGRFIFLSFGLLVVFLSLSGTGA) are cleaved as a signal peptide. 3 cysteine pairs are disulfide-bonded: Cys-25-Cys-36, Cys-53-Cys-150, and Cys-125-Cys-142. In terms of domain architecture, C-type lectin spans 32-151 (YEGHCYNIFH…CGERNPFVCE (120 aa)). Ca(2+) is bound by residues Ser-64, Glu-66, and Glu-70. Glu-151 serves as a coordination point for Ca(2+).

This sequence belongs to the snaclec family. As to quaternary structure, heterodimer of subunits A and B; disulfide-linked. Expressed by the venom gland.

Its subcellular location is the secreted. Functionally, anticoagulant protein which binds to the gamma-carboxyglutamic acid-domain regions of factors IX (F9) and factor X (F10) in the presence of calcium with a 1 to 1 stoichiometry. The chain is Snaclec coagulation factor IX/factor X-binding protein subunit A from Gloydius halys (Chinese water mocassin).